The following is a 188-amino-acid chain: Elongation factor P (188 aa).

Position 34 is an N6-(3,6-diaminohexanoyl)-5-hydroxylysine (Lys34).

It belongs to the elongation factor P family. May be beta-lysylated on the epsilon-amino group of Lys-34 by the combined action of EpmA and EpmB, and then hydroxylated on the C5 position of the same residue by EpmC (if this protein is present). Lysylation is critical for the stimulatory effect of EF-P on peptide-bond formation. The lysylation moiety may extend toward the peptidyltransferase center and stabilize the terminal 3-CCA end of the tRNA. Hydroxylation of the C5 position on Lys-34 may allow additional potential stabilizing hydrogen-bond interactions with the P-tRNA.

Its subcellular location is the cytoplasm. The protein operates within protein biosynthesis; polypeptide chain elongation. Its function is as follows. Involved in peptide bond synthesis. Alleviates ribosome stalling that occurs when 3 or more consecutive Pro residues or the sequence PPG is present in a protein, possibly by augmenting the peptidyl transferase activity of the ribosome. Modification of Lys-34 is required for alleviation. The polypeptide is Elongation factor P (Serratia proteamaculans (strain 568)).